Consider the following 255-residue polypeptide: Taurine import ATP-binding protein TauB (255 aa).

The 228-residue stretch at 2–229 (LQISHLYADY…RFVAGESSRS (228 aa)) folds into the ABC transporter domain. 34 to 41 (GPSGCGKT) contacts ATP.

Belongs to the ABC transporter superfamily. Taurine importer (TC 3.A.1.17.1) family. As to quaternary structure, the complex is composed of two ATP-binding proteins (TauB), two transmembrane proteins (TauC) and a solute-binding protein (TauA).

The protein resides in the cell inner membrane. It carries out the reaction taurine(out) + ATP + H2O = taurine(in) + ADP + phosphate + H(+). Functionally, part of the ABC transporter complex TauABC involved in taurine import. Responsible for energy coupling to the transport system. The protein is Taurine import ATP-binding protein TauB of Escherichia coli O6:H1 (strain CFT073 / ATCC 700928 / UPEC).